We begin with the raw amino-acid sequence, 209 residues long: Kynurenine formamidase (209 aa).

Trp-20 is a binding site for substrate. Positions 50, 54, and 56 each coordinate Zn(2+). The active-site Proton donor/acceptor is His-60. Residues His-161 and Glu-173 each coordinate Zn(2+).

Belongs to the Cyclase 1 superfamily. KynB family. In terms of assembly, homodimer. It depends on Zn(2+) as a cofactor.

It catalyses the reaction N-formyl-L-kynurenine + H2O = L-kynurenine + formate + H(+). It participates in amino-acid degradation; L-tryptophan degradation via kynurenine pathway; L-kynurenine from L-tryptophan: step 2/2. Catalyzes the hydrolysis of N-formyl-L-kynurenine to L-kynurenine, the second step in the kynurenine pathway of tryptophan degradation. In Bacillus cereus (strain ATCC 10987 / NRS 248), this protein is Kynurenine formamidase.